A 260-amino-acid polypeptide reads, in one-letter code: Carbonic anhydrase 3 (260 aa).

The residue at position 2 (Ala-2) is an N-acetylalanine. The 257-residue stretch at Lys-3–Phe-259 folds into the Alpha-carbonic anhydrase domain. 4 positions are modified to phosphoserine: Ser-29, Ser-43, Ser-50, and Ser-55. Residues Lys-64–Arg-67 form an involved in proton transfer region. Position 73 is a phosphothreonine (Thr-73). Residues His-94, His-96, and His-119 each coordinate Zn(2+). Tyr-127 is subject to Phosphotyrosine. Position 176 is a phosphothreonine (Thr-176). 2 positions are modified to S-glutathionyl cysteine: Cys-182 and Cys-187. Thr-198–Thr-199 is a substrate binding site. At Thr-216 the chain carries Phosphothreonine. Phosphoserine is present on Ser-219.

This sequence belongs to the alpha-carbonic anhydrase family. Zn(2+) is required as a cofactor. In terms of processing, S-thiolated both by thiol-disulfide exchange with glutathione disulfide and by oxyradical-initiated S-thiolation with reduced glutathione. Post-translationally, S-glutathionylated in hepatocytes under oxidative stress.

It localises to the cytoplasm. It carries out the reaction hydrogencarbonate + H(+) = CO2 + H2O. With respect to regulation, inhibited by acetazolamide. In terms of biological role, reversible hydration of carbon dioxide. This Sus scrofa (Pig) protein is Carbonic anhydrase 3.